Reading from the N-terminus, the 2359-residue chain is Pre-mRNA-processing-splicing factor 8B (2359 aa).

The interval M1–A50 is disordered. A compositionally biased stretch (polar residues) spans T32–T41. Residues T2129–G2260 form the MPN domain.

The protein resides in the nucleus. Its function is as follows. Functions as a scaffold that mediates the ordered assembly of spliceosomal proteins and snRNAs. Required for the assembly of the U4/U6-U5 tri-snRNP complex. The polypeptide is Pre-mRNA-processing-splicing factor 8B (Arabidopsis thaliana (Mouse-ear cress)).